We begin with the raw amino-acid sequence, 421 residues long: Tyrosine--tRNA ligase (421 aa).

Y42 is a binding site for L-tyrosine. Positions 47–56 (CTAPSLHVGS) match the 'HIGH' region motif. Y179 and Q183 together coordinate L-tyrosine. The 'KMSKS' region motif lies at 239-243 (KMGKT). Residue K242 participates in ATP binding. The S4 RNA-binding domain occupies 354-419 (LGILAAFAKA…RKKHVLLRLA (66 aa)).

Belongs to the class-I aminoacyl-tRNA synthetase family. TyrS type 1 subfamily. In terms of assembly, homodimer.

It is found in the cytoplasm. It carries out the reaction tRNA(Tyr) + L-tyrosine + ATP = L-tyrosyl-tRNA(Tyr) + AMP + diphosphate + H(+). Functionally, catalyzes the attachment of tyrosine to tRNA(Tyr) in a two-step reaction: tyrosine is first activated by ATP to form Tyr-AMP and then transferred to the acceptor end of tRNA(Tyr). The chain is Tyrosine--tRNA ligase from Beijerinckia indica subsp. indica (strain ATCC 9039 / DSM 1715 / NCIMB 8712).